The primary structure comprises 256 residues: Protein Ta0487 (256 aa).

Belongs to the CinA family.

The polypeptide is Protein Ta0487 (Thermoplasma acidophilum (strain ATCC 25905 / DSM 1728 / JCM 9062 / NBRC 15155 / AMRC-C165)).